A 224-amino-acid polypeptide reads, in one-letter code: Octanoyltransferase (224 aa).

Residues 29–224 (PGTPDELWLC…GDRLESYLSP (196 aa)) enclose the BPL/LPL catalytic domain. Substrate contacts are provided by residues 68–75 (RGGQVTYH), 157–159 (ALG), and 170–172 (GLA). Cys-188 serves as the catalytic Acyl-thioester intermediate.

It belongs to the LipB family.

The protein localises to the cytoplasm. The catalysed reaction is octanoyl-[ACP] + L-lysyl-[protein] = N(6)-octanoyl-L-lysyl-[protein] + holo-[ACP] + H(+). The protein operates within protein modification; protein lipoylation via endogenous pathway; protein N(6)-(lipoyl)lysine from octanoyl-[acyl-carrier-protein]: step 1/2. Its function is as follows. Catalyzes the transfer of endogenously produced octanoic acid from octanoyl-acyl-carrier-protein onto the lipoyl domains of lipoate-dependent enzymes. Lipoyl-ACP can also act as a substrate although octanoyl-ACP is likely to be the physiological substrate. This is Octanoyltransferase from Methylibium petroleiphilum (strain ATCC BAA-1232 / LMG 22953 / PM1).